Reading from the N-terminus, the 972-residue chain is Aminopeptidase Ey (972 aa).

Over 2 to 10 (AAGFFISKS) the chain is Cytoplasmic. Residues 11–31 (VGIVGIVLALGAVATIIALSV) traverse the membrane as a helical; Signal-anchor for type II membrane protein segment. Over 32 to 972 (VYAQEKNKSS…AWFRAETASS (941 aa)) the chain is Extracellular. The interval 33–72 (YAQEKNKSSGGSGGSDTTSTTTASTTTTSTTTASTTAAPN) is cytosolic Ser/Thr-rich junction. The interval 37-77 (KNKSSGGSGGSDTTSTTTASTTTTSTTTASTTAAPNNPWNR) is disordered. N-linked (GlcNAc...) asparagine glycosylation occurs at asparagine 38. The segment covering 47 to 70 (SDTTSTTTASTTTTSTTTASTTAA) has biased composition (low complexity). The tract at residues 73-967 (NPWNRWRLPT…KEVVHAWFRA (895 aa)) is metalloprotease. Asparagine 110, asparagine 132, asparagine 147, asparagine 206, asparagine 269, and asparagine 296 each carry an N-linked (GlcNAc...) asparagine glycan. Position 355–359 (355–359 (GAMEN)) interacts with substrate. Residue histidine 391 participates in Zn(2+) binding. The active-site Proton acceptor is the glutamate 392. Residues histidine 395 and glutamate 414 each contribute to the Zn(2+) site. N-linked (GlcNAc...) asparagine glycosylation is found at asparagine 513, asparagine 574, asparagine 584, asparagine 628, asparagine 684, and asparagine 742. Cysteine 764 and cysteine 771 are oxidised to a cystine. N-linked (GlcNAc...) asparagine glycosylation occurs at asparagine 785. A disulfide bridge connects residues cysteine 801 and cysteine 837.

It belongs to the peptidase M1 family. As to quaternary structure, homodimer. Requires Zn(2+) as cofactor. As to expression, detected in the plasma and granule fractions of egg yolk (at protein level).

The protein localises to the cell membrane. It catalyses the reaction Differs from other aminopeptidases in broad specificity for amino acids in the P1 position and the ability to hydrolyze peptides of four or five residues that contain Pro in the P1' position.. In terms of biological role, broad specificity aminopeptidase. Degrades a variety of peptides possessing various N-terminal amino acids including hydrophobic, basic and acidic amino acids. Preferentially hydrolyzes small peptides consisting of 4 or 5 amino acids. Hydrolyzes the N-terminal Xaa-Pro bonds in the chicken brain peptide Leu-Pro-Leu-Arg-PheNH2, the substance P fragment Arg-Pro-Lys-Pro and the bradykinin fragment Arg-Pro-Pro-Gly-Phe. Hydrolyzes the N-formylated peptides fMet-Leu-Phe, fMet-Ala-Gly-Ser-Glu and fMet-Nle-Leu-Phe-Nle-Tyr-Lys, but does not hydrolyze peptides with acetylation or pyroglutamic acid at N-terminus. Does not hydrolyze large peptides such as complete substance P, bradykinin or schistoFLRFamide. The sequence is that of Aminopeptidase Ey (ANPEP) from Gallus gallus (Chicken).